The primary structure comprises 155 residues: Small ribosomal subunit protein uS7c (155 aa).

Belongs to the universal ribosomal protein uS7 family. In terms of assembly, part of the 30S ribosomal subunit.

The protein localises to the plastid. It localises to the chloroplast. One of the primary rRNA binding proteins, it binds directly to 16S rRNA where it nucleates assembly of the head domain of the 30S subunit. The sequence is that of Small ribosomal subunit protein uS7c (rps7) from Spathiphyllum wallisii (Peace lily).